The sequence spans 441 residues: Xaa-Pro dipeptidase (441 aa).

The Mn(2+) site is built by Asp-244, Asp-255, His-336, Glu-381, and Glu-420.

Belongs to the peptidase M24B family. Bacterial-type prolidase subfamily. Mn(2+) serves as cofactor.

The catalysed reaction is Xaa-L-Pro dipeptide + H2O = an L-alpha-amino acid + L-proline. Its function is as follows. Splits dipeptides with a prolyl residue in the C-terminal position. This Xanthomonas campestris pv. campestris (strain B100) protein is Xaa-Pro dipeptidase.